A 196-amino-acid chain; its full sequence is ATP-dependent Clp protease proteolytic subunit (196 aa).

Serine 101 functions as the Nucleophile in the catalytic mechanism. Residue histidine 126 is part of the active site.

Belongs to the peptidase S14 family. As to quaternary structure, component of the chloroplastic Clp protease core complex.

The protein resides in the plastid. It is found in the chloroplast stroma. The enzyme catalyses Hydrolysis of proteins to small peptides in the presence of ATP and magnesium. alpha-casein is the usual test substrate. In the absence of ATP, only oligopeptides shorter than five residues are hydrolyzed (such as succinyl-Leu-Tyr-|-NHMec, and Leu-Tyr-Leu-|-Tyr-Trp, in which cleavage of the -Tyr-|-Leu- and -Tyr-|-Trp bonds also occurs).. Functionally, cleaves peptides in various proteins in a process that requires ATP hydrolysis. Has a chymotrypsin-like activity. Plays a major role in the degradation of misfolded proteins. This chain is ATP-dependent Clp protease proteolytic subunit, found in Arabis hirsuta (Hairy rock-cress).